Reading from the N-terminus, the 132-residue chain is UPF0146 protein PF0123 (132 aa).

This sequence belongs to the UPF0146 family.

This Pyrococcus furiosus (strain ATCC 43587 / DSM 3638 / JCM 8422 / Vc1) protein is UPF0146 protein PF0123.